A 130-amino-acid chain; its full sequence is Small ribosomal subunit protein uS8 (130 aa).

The protein belongs to the universal ribosomal protein uS8 family. Part of the 30S ribosomal subunit. Contacts proteins S5 and S12.

Its function is as follows. One of the primary rRNA binding proteins, it binds directly to 16S rRNA central domain where it helps coordinate assembly of the platform of the 30S subunit. The sequence is that of Small ribosomal subunit protein uS8 from Yersinia pseudotuberculosis serotype O:1b (strain IP 31758).